A 225-amino-acid polypeptide reads, in one-letter code: tRNA (guanine-N(7)-)-methyltransferase (225 aa).

Positions 56, 81, 108, and 131 each coordinate S-adenosyl-L-methionine. The active site involves Asp-131. Residues Lys-135, Asp-167, and 204 to 207 (TKFE) each bind substrate.

Belongs to the class I-like SAM-binding methyltransferase superfamily. TrmB family.

The catalysed reaction is guanosine(46) in tRNA + S-adenosyl-L-methionine = N(7)-methylguanosine(46) in tRNA + S-adenosyl-L-homocysteine. It functions in the pathway tRNA modification; N(7)-methylguanine-tRNA biosynthesis. Its function is as follows. Catalyzes the formation of N(7)-methylguanine at position 46 (m7G46) in tRNA. The chain is tRNA (guanine-N(7)-)-methyltransferase from Legionella pneumophila (strain Lens).